Here is a 1353-residue protein sequence, read N- to C-terminus: Inhibitor of Bruton tyrosine kinase (1353 aa).

ANK repeat units follow at residues Phe51–Val80 and Ser85–Ile114. RCC1 repeat units lie at residues Pro141–Gln194, Lys195–Glu246, and Gly248–Arg301. BTB domains lie at His564–Thr644 and Cys768–Lys836. An ANK 3 repeat occupies Ser806–Ile835. The tract at residues His970 to Ile1001 is disordered. Positions Lys976–Lys988 are enriched in basic residues. The residue at position 990 (Ser990) is a Phosphoserine. Residues Ser992–Ile1001 are compositionally biased toward polar residues. 10 positions are modified to phosphoserine: Ser1004, Ser1030, Ser1033, Ser1039, Ser1045, Ser1054, Ser1083, Ser1111, Ser1113, and Ser1116. The tract at residues Lys1134–Gln1155 is disordered.

Interacts with the PH domain of BTK. Isoform 2 does not interact with BTK. Expressed in DeFew, HEK293T, HeLa and in Jurkat, MC3 and NB4 lymphoid cells (at protein level). Isoform 1 is the predominant isoform expressed in all examined tissues and cell lines. Highly expressed in hemopoietic tissues (fetal liver, spleen, lymph node, thymus, peripheral blood leukocytes and bone marrow). Weakly or not expressed in other tissues.

The protein resides in the cytoplasm. It localises to the membrane. It is found in the nucleus. Functionally, acts as an inhibitor of BTK tyrosine kinase activity, thereby playing a role in B-cell development. Down-regulates BTK kinase activity, leading to interference with BTK-mediated calcium mobilization and NF-kappa-B-driven transcription. The polypeptide is Inhibitor of Bruton tyrosine kinase (IBTK) (Homo sapiens (Human)).